Here is a 146-residue protein sequence, read N- to C-terminus: uncharacterized protein (146 aa).

To E.coli YmfS.

This is an uncharacterized protein from Escherichia coli (strain K12).